The chain runs to 292 residues: MKDIATPNRTKDIVEKYGFSFKKSLGQNFLIDTNVLNRIVDHAEIGSESGAIEIGPGIGALTEQLAKRAKKVVAFEIDQRLLPILDETLAPYGNVTVINKDVLKADVHEVFSEQFEEGQDVMVVANLPYYITTPILFKLLEEKLPVRGFVVMMQKEVGDRLAAKPGTKEYGSLSIAIQYYTEVETVMTVPRTVFVPQPNVDSAIIRLLKRPKPVVEVTDETFFFEVVRASFAQRRKTLMNNLSNNLNGFPKDKELLDRILTEVGIDPKRRGETLSIEEFATLSNALVLHKLS.

The S-adenosyl-L-methionine site is built by N28, L30, G55, E76, D101, and N126.

It belongs to the class I-like SAM-binding methyltransferase superfamily. rRNA adenine N(6)-methyltransferase family. RsmA subfamily.

It localises to the cytoplasm. The catalysed reaction is adenosine(1518)/adenosine(1519) in 16S rRNA + 4 S-adenosyl-L-methionine = N(6)-dimethyladenosine(1518)/N(6)-dimethyladenosine(1519) in 16S rRNA + 4 S-adenosyl-L-homocysteine + 4 H(+). Functionally, specifically dimethylates two adjacent adenosines (A1518 and A1519) in the loop of a conserved hairpin near the 3'-end of 16S rRNA in the 30S particle. May play a critical role in biogenesis of 30S subunits. In Bacillus anthracis, this protein is Ribosomal RNA small subunit methyltransferase A.